Consider the following 1124-residue polypeptide: Anillin (1124 aa).

Met-1 is subject to N-acetylmethionine. Basic and acidic residues predominate over residues Met-1 to Glu-25. The required for ubiquitination stretch occupies residues Met-1–Ser-45. 2 disordered regions span residues Met-1–Ile-113 and Ala-136–Val-196. The interval Met-1–Arg-155 is interaction with CD2AP. The tract at residues Met-1–Pro-230 is nuclear localization. A phosphoserine mark is found at Ser-54 and Ser-72. The segment covering Val-77–Cys-96 has biased composition (polar residues). Phosphoserine is present on residues Ser-97 and Ser-102. Residues Ser-97–Gln-108 show a composition bias toward low complexity. Basic and acidic residues predominate over residues Lys-148–Asn-158. Residues Ser-172 and Ser-182 each carry the phosphoserine modification. Residue Thr-194 is modified to Phosphothreonine. Ser-225 and Ser-252 each carry phosphoserine. The tract at residues Gly-231 to Tyr-676 is interaction with F-actin. Lys-254 is covalently cross-linked (Glycyl lysine isopeptide (Lys-Gly) (interchain with G-Cter in SUMO1)). At Ser-261 the chain carries Phosphoserine. Over residues Thr-294–Asp-305 the composition is skewed to polar residues. The segment at Thr-294–Gly-328 is disordered. The residue at position 320 (Thr-320) is a Phosphothreonine. 2 positions are modified to phosphoserine: Ser-323 and Ser-339. Thr-364 carries the post-translational modification Phosphothreonine. Lys-371 is subject to N6-acetyllysine. Residues Arg-380 to Pro-389 show a composition bias toward basic and acidic residues. The segment at Arg-380–Ile-399 is disordered. A phosphothreonine mark is found at Thr-397 and Thr-401. Residues Ser-417, Ser-419, Ser-449, Ser-485, Ser-518, Ser-553, and Ser-561 each carry the phosphoserine modification. Residues Phe-569 to Ile-604 adopt a coiled-coil conformation. Disordered stretches follow at residues Asp-579 to Asp-600 and Leu-625 to Ser-664. Basic and acidic residues-rich tracts occupy residues Leu-631–Lys-644 and Pro-654–Ser-664. Residues Ser-637, Ser-642, Ser-658, Ser-661, and Ser-664 each carry the phosphoserine modification. The residue at position 671 (Tyr-671) is a Phosphotyrosine. Ser-678, Ser-688, Ser-792, and Ser-927 each carry phosphoserine. The interval Gln-730–Pro-1124 is localization to the cleavage furrow. Residues Ser-983–Val-1107 form the PH domain.

In terms of assembly, interacts with F-actin. Interacts with CD2AP. May interact with RHOA. Interacts with FZR1/CDH1 during mitotic exit. Post-translationally, phosphorylated during mitosis. Ubiquitinated, and this requires FZR1/CDH1. Ubiquitously expressed. Present at highest levels in the brain, at high levels in the placenta and testis, at intermediate levels in the intestine, ovary, skeletal muscle and thymus and at lower levels in heart, kidney, liver, lung, pancreas, prostate and spleen. In the kidney, it is widely expressed in tubules, but sparsely expressed in the glomerulus. Expression is significantly increased in renal biopsy specimens from idiopathic FSGS. Overexpressed in many tumor types including breast, colorectal, endometrial, hepatic, kidney, lung, ovarian and pancreatic tumors.

Its subcellular location is the nucleus. The protein localises to the cytoplasm. It is found in the cytoskeleton. It localises to the cell cortex. The protein resides in the cell projection. Its subcellular location is the bleb. Its function is as follows. Required for cytokinesis. Essential for the structural integrity of the cleavage furrow and for completion of cleavage furrow ingression. Plays a role in bleb assembly during metaphase and anaphase of mitosis. May play a significant role in podocyte cell migration. The protein is Anillin (ANLN) of Homo sapiens (Human).